The sequence spans 2210 residues: Orsellinic acid synthase ArmB (2210 aa).

The interval 38-261 (LLLDACHYAF…HKTTVDALYH (224 aa)) is N-terminal acylcarrier protein transacylase domain (SAT). The region spanning 391–817 (QEPIAICGMS…GSNGALLLEE (427 aa)) is the Ketosynthase family 3 (KS3) domain. Catalysis depends on for beta-ketoacyl synthase activity residues C561, H696, and H736. Positions 915–1240 (VFVFSGQGGQ…GLTLSSSLSQ (326 aa)) are malonyl-CoA:ACP transacylase (MAT) domain. S1009 (for acyl/malonyl transferase activity) is an active-site residue. An N-terminal hotdog fold region spans residues 1307 to 1437 (MLQSWAQFPS…GQFRPLLVVD (131 aa)). A PKS/mFAS DH domain is found at 1307-1614 (MLQSWAQFPS…FKKLRLNTLQ (308 aa)). Residues 1336-1611 (ITGHIVGDVP…GMCFKKLRLN (276 aa)) are product template (PT) domain. H1339 functions as the Proton acceptor; for dehydratase activity in the catalytic mechanism. Residues 1464 to 1614 (AEVFTTRTAY…FKKLRLNTLQ (151 aa)) form a C-terminal hotdog fold region. The Proton donor; for dehydratase activity role is filled by D1525. The region spanning 1660 to 1735 (VDVQNTVLNI…ELVREISSTV (76 aa)) is the Carrier 1 domain. The residue at position 1694 (S1694) is an O-(pantetheine 4'-phosphoryl)serine. The disordered stretch occupies residues 1739-1761 (AATAVNTPETASTPEPTLQGDAS). The Carrier 2 domain maps to 1845–1922 (SSPSSDLVDT…AVNQYISSKR (78 aa)). S1882 carries the post-translational modification O-(pantetheine 4'-phosphoryl)serine. The interval 1920-1946 (SKRPGKSPKQVEETAMDPDREEDLSDL) is disordered. Positions 1933–1944 (TAMDPDREEDLS) are enriched in acidic residues. The tract at residues 1963–2202 (VPMSVQKSSS…LGAVTQALVD (240 aa)) is thioesterase (TE) domain.

The protein operates within secondary metabolite biosynthesis. Non-reducing polyketide synthase, part of the gene cluster that mediates the biosynthesis of melleolides, a range of antifungal and phytotoxic polyketide derivatives composed of an orsellinic acid (OA) moiety esterified to various sesquiterpene alcohols. The first step in melleolides biosynthesis is performed by the delta(6)-protoilludene synthase PRO1 which catalyzes the cyclization of farnesyl diphosphate to protoilludene. The orsellinic acid synthase armB produces OA by condensing acetyl-CoA with 3 malonyl-CoA units in a three-round chain elongation reaction folowed by a C2-C7 ring closure. ArmB further catalyzes the trans-esterification of OA to the various sesquiterpene alcohols resulting from the hydroxylation of protoilludene. The melleolides cluster also includes 5 cytochrome P450 monooxygenases, 4 NAD(+)-dependent oxidoreductases, one flavin-dependent oxidoreductase, and one O-methyltransferase. The cytochrome P450 monooxygenases may be involved in protoilludene hydroxylation to elaborate melleolides with multiple alcohol groups, such as melleolide D, which carries alcohol functionalities at C-4, C-5, C-10, and C-13. The role of the NAD(+)-dependent enzymes remains unknown. Numerous melleolides, including arnamial, show 5'-O-methylation of the aromatic moiety which may be catalyzed by the methyltransferase encoded in the cluster. The flavin-dependent oxidoreductase might represent the dehydrogenase yielding the aldehyde in position 1 of arnamial and other melleolides. Finally, several halogenase localized outside of the cluster (armH1 to armH5), are able to catalyze the transfer of a single chlorine atom to the melleolide backbone, resulting in a 6'-chloromelleolide product. The protein is Orsellinic acid synthase ArmB of Armillaria ostoyae (Armillaria root rot fungus).